The sequence spans 493 residues: Galactose-1-phosphate uridylyltransferase (493 aa).

It belongs to the galactose-1-phosphate uridylyltransferase type 2 family.

The protein resides in the cytoplasm. It catalyses the reaction alpha-D-galactose 1-phosphate + UDP-alpha-D-glucose = alpha-D-glucose 1-phosphate + UDP-alpha-D-galactose. The protein operates within carbohydrate metabolism; galactose metabolism. This chain is Galactose-1-phosphate uridylyltransferase, found in Streptococcus thermophilus (strain ATCC BAA-250 / LMG 18311).